We begin with the raw amino-acid sequence, 62 residues long: UPF0339 protein Atu5359 (62 aa).

Belongs to the UPF0339 family.

The sequence is that of UPF0339 protein Atu5359 from Agrobacterium fabrum (strain C58 / ATCC 33970) (Agrobacterium tumefaciens (strain C58)).